We begin with the raw amino-acid sequence, 400 residues long: Probable vacuolar protease A (400 aa).

The N-terminal stretch at 1 to 18 (MKGSLLLAGATLLGCTSA) is a signal peptide. The propeptide at 19–72 (KLHSLKLKKVSLKEQLEHADIDVQIKSLGQKYMGIRPEQHEQQMFKEQTPIEVE) is activation peptide. Residues 87 to 397 (YFSEISIGTP…DLGKGTVGLA (311 aa)) enclose the Peptidase A1 domain. The active site involves D105. A disulfide bridge links C118 with C123. N-linked (GlcNAc...) asparagine glycosylation is present at N140. Residue D289 is part of the active site. C323 and C356 are disulfide-bonded. A glycan (N-linked (GlcNAc...) asparagine) is linked at N340.

The protein belongs to the peptidase A1 family.

It localises to the vacuole lumen. The protein localises to the secreted. It catalyses the reaction Hydrolysis of proteins with broad specificity for peptide bonds. Cleaves -Leu-Leu-|-Val-Tyr- bond in a synthetic substrate. Does not act on esters of Tyr or Arg.. In terms of biological role, vacuolar aspartic endopeptidase which is probably also secreted and contributes to virulence. The protein is Probable vacuolar protease A (PEP2) of Arthroderma benhamiae (strain ATCC MYA-4681 / CBS 112371) (Trichophyton mentagrophytes).